Reading from the N-terminus, the 622-residue chain is Chaperone protein HscA homolog (622 aa).

The protein belongs to the heat shock protein 70 family.

In terms of biological role, chaperone involved in the maturation of iron-sulfur cluster-containing proteins. Has a low intrinsic ATPase activity which is markedly stimulated by HscB. The sequence is that of Chaperone protein HscA homolog from Burkholderia thailandensis (strain ATCC 700388 / DSM 13276 / CCUG 48851 / CIP 106301 / E264).